The primary structure comprises 125 residues: Protein sigma-1-small (125 aa).

It belongs to the orthoreovirus sigma-1s protein family.

The sequence is that of Protein sigma-1-small (S1) from Mammalia (T2J).